The following is a 90-amino-acid chain: Non-structural protein NS-S (90 aa).

Belongs to the hantavirus NS-S protein family.

It localises to the host cytoplasm. Its subcellular location is the host perinuclear region. Its function is as follows. Antagonizes host type-I IFN signaling pathway. This Homo sapiens (Human) protein is Non-structural protein NS-S (N).